The chain runs to 189 residues: Phosphoheptose isomerase (189 aa).

One can recognise an SIS domain in the interval 34–189; sequence LVEAFRKGNK…CDLVEKALFA (156 aa). Substrate is bound at residue 49 to 51; it reads NGG. Zn(2+) contacts are provided by H58 and E62. Residues E62, 91-92, 117-119, S122, and Q169 contribute to the substrate site; these read ND and STS. Zn(2+) is bound by residues Q169 and H177.

It belongs to the SIS family. GmhA subfamily. In terms of assembly, homotetramer. Requires Zn(2+) as cofactor.

It is found in the cytoplasm. It catalyses the reaction 2 D-sedoheptulose 7-phosphate = D-glycero-alpha-D-manno-heptose 7-phosphate + D-glycero-beta-D-manno-heptose 7-phosphate. Its pathway is carbohydrate biosynthesis; D-glycero-D-manno-heptose 7-phosphate biosynthesis; D-glycero-alpha-D-manno-heptose 7-phosphate and D-glycero-beta-D-manno-heptose 7-phosphate from sedoheptulose 7-phosphate: step 1/1. Catalyzes the isomerization of sedoheptulose 7-phosphate in D-glycero-D-manno-heptose 7-phosphate. The sequence is that of Phosphoheptose isomerase from Pelobacter propionicus (strain DSM 2379 / NBRC 103807 / OttBd1).